The primary structure comprises 359 residues: Uracil-DNA glycosylase (359 aa).

The N-terminal 21 residues, 1–21 (MWCMRRLPTNSVMTVARKRKQ), are a transit peptide targeting the mitochondrion. Asp-162 acts as the Proton acceptor in catalysis.

The protein belongs to the uracil-DNA glycosylase (UDG) superfamily. UNG family.

It is found in the mitochondrion. Its subcellular location is the nucleus. The catalysed reaction is Hydrolyzes single-stranded DNA or mismatched double-stranded DNA and polynucleotides, releasing free uracil.. Excises uracil residues from the DNA which can arise as a result of misincorporation of dUMP residues by DNA polymerase or due to deamination of cytosine. Not involved in strand-directed mismatch repair. This chain is Uracil-DNA glycosylase, found in Saccharomyces cerevisiae (strain ATCC 204508 / S288c) (Baker's yeast).